Reading from the N-terminus, the 746-residue chain is Centromere protein I (746 aa).

Residues 1-24 are disordered; the sequence is MATQRVTRNSQQQNRISQGSNSRQ.

This sequence belongs to the CENP-I/CTF3 family. Component of the CENPA-CAD complex, composed of CENPI, CENPK, CENPL, CENPO, CENPP, CENPQ, CENPR and CENPS. The CENPA-CAD complex interacts with the CENPA-NAC complex, at least composed of CENPA, CENPC, CENPH, CENPM, CENPN, CENPT and CENPU. Interacts with SENP6. In terms of processing, sumoylated. Sumoylated form can be polyubiquitinated by RNF4, leading to its degradation. Desumoylation by SENP6 prevents its degradation.

The protein localises to the nucleus. It localises to the chromosome. Its subcellular location is the centromere. Component of the CENPA-CAD (nucleosome distal) complex, a complex recruited to centromeres which is involved in assembly of kinetochore proteins, mitotic progression and chromosome segregation. May be involved in incorporation of newly synthesized CENPA into centromeres via its interaction with the CENPA-NAC complex. Required for the localization of CENPF, MAD1L1 and MAD2 (MAD2L1 or MAD2L2) to kinetochores. Involved in the response of gonadal tissues to follicle-stimulating hormone. This is Centromere protein I (Cenpi) from Mus musculus (Mouse).